A 302-amino-acid polypeptide reads, in one-letter code: MLKSSKKEDDSKKNHDNKSIFHLRKLFSPIKSLFSNKVPDDFFSVIKRLKTNSQKMTLDERNILANLLKLKGKTIEDIMVPRSDIAAIKLTTNIEELNESIKVKIPHTRTLIYDGTLDNIVGFIHIKDLFKALVTKQNFRLKKLIRKHIIAAPSMKLLDLLAKMRREKTHIAIVIDEYGGTDGLVTIEDVMEALVGRIDDEHDQKSEYDNYKVINNSTIISNARVEVEVLEEIIGEKLKDDDDDEFDTIGGLVLTKMGNVPAVGTKINVSENIEIEVTDANPRSLKQVKITLKNSLKRAKSS.

CBS domains lie at 79–141 (MVPR…NFRL) and 144–201 (LIRK…IDDE).

This sequence belongs to the UPF0053 family. Hemolysin C subfamily.

The polypeptide is Possible hemolysin C (tlyC) (Rickettsia bellii (strain OSU 85-389)).